We begin with the raw amino-acid sequence, 221 residues long: Vesicle transport v-SNARE 11 (221 aa).

Ser2 carries the N-acetylserine modification. The Cytoplasmic segment spans residues 2–198 (SDVFDGYERQ…MTRRMNKNKW (197 aa)). Residues 32-93 (EQKKQKLSEI…FKTEVKRITS (62 aa)) are a coiled coil. The helical; Anchor for type IV membrane protein transmembrane segment at 199–219 (TIGAIIIALIAAIFIILYFKL) threads the bilayer. The Vesicular segment spans residues 220 to 221 (TK).

Belongs to the VTI1 family. In terms of assembly, forms SNARE complexes with the t-SNAREs SYP51 and either SYP21 or SYP22 in the PVC, and with a much lower affinity with SYP61 in the TGN. Does not interact with SYP41, SYP42 or VPS45. Binds to EPSIN1. Interacts with SCYL2B. In terms of tissue distribution, expressed in roots, stems, flowers and leaves.

The protein resides in the golgi apparatus. It is found in the trans-Golgi network membrane. The protein localises to the prevacuolar compartment membrane. Its subcellular location is the vacuole membrane. Functionally, functions as a v-SNARE responsible for targeting AtELP-containing vesicles from the trans-Golgi network (TGN) to the prevacuolar compartment (PVC) and mediates liposome fusion. May be also involved in retrograde traffic to the cis-Golgi. Promotes the formation of vacuolar membrane 'bulbs'. Necessary to deliver proteins to the lytic vacuole, but seems not involved in storage proteins transport. Required for amyloplast sedimentation in the endodermis during shoot gravitropism, which are thus acting as statoliths. Expression in the endodermis is essential for the shoot gravitropic response, whereas expression in other tissues may be responsible for the correct stem and leaf shape. This chain is Vesicle transport v-SNARE 11, found in Arabidopsis thaliana (Mouse-ear cress).